Consider the following 530-residue polypeptide: Na(+)/H(+) antiporter NhaB (530 aa).

The next 12 membrane-spanning stretches (helical) occupy residues 13 to 33 (FLGK…IINP), 98 to 118 (LLLV…LFIF), 123 to 145 (LGIQ…LSAF), 149 to 166 (LTVI…YSIY), 205 to 225 (LLMH…VGEP), 238 to 258 (FGEF…CGIL), 308 to 328 (IAVW…LIGL), 330 to 350 (VIIL…GKAF), 356 to 376 (FTAL…QALF), 393 to 413 (LALF…VFVG), 451 to 471 (ATPN…APLI), and 480 to 500 (IMAL…IVFF).

The protein belongs to the NhaB Na(+)/H(+) (TC 2.A.34) antiporter family.

It localises to the cell inner membrane. The catalysed reaction is 2 Na(+)(in) + 3 H(+)(out) = 2 Na(+)(out) + 3 H(+)(in). Na(+)/H(+) antiporter that extrudes sodium in exchange for external protons. The protein is Na(+)/H(+) antiporter NhaB of Vibrio atlanticus (strain LGP32) (Vibrio splendidus (strain Mel32)).